Consider the following 309-residue polypeptide: Olfactory receptor 2AP1 (309 aa).

Over 1–23 the chain is Extracellular; sequence MKNKTVLTEFILLGLTDVPELQV. Asn-3 is a glycosylation site (N-linked (GlcNAc...) asparagine). Residues 24–47 form a helical membrane-spanning segment; it reads AVFTFLFLAYLLSILGNLTILILT. At 48 to 55 the chain is on the cytoplasmic side; it reads LLDSHLQT. Residues 56 to 77 traverse the membrane as a helical segment; sequence PMYFFLRNFSFLEISFTNIFIP. At 78-98 the chain is on the extracellular side; sequence RVLISITTGNKSISFAGCFTQ. N-linked (GlcNAc...) asparagine glycosylation occurs at Asn-87. An intrachain disulfide couples Cys-95 to Cys-187. The chain crosses the membrane as a helical span at residues 99 to 118; it reads YFFAMFLGATEFYLLAAMSY. Topologically, residues 119–137 are cytoplasmic; the sequence is DRYVAICKPLHYTTIMSSR. Residues 138–156 form a helical membrane-spanning segment; that stretch reads ICIQLIFCSWLGGLMAIIP. The Extracellular portion of the chain corresponds to 157 to 193; the sequence is TITLMSQQDFCASNRLNHYFCDYEPLLELSCSDTSLI. A helical transmembrane segment spans residues 194 to 217; sequence EKVVFLVASVTLVVTLVLVILSYA. The Cytoplasmic portion of the chain corresponds to 218-234; it reads FIIKTILKLPSAQQRTK. A helical membrane pass occupies residues 235–257; it reads AFSTCSSHMIVISLSYGSCMFMY. Over 258–270 the chain is Extracellular; that stretch reads INPSAKEGDTFNK. A helical transmembrane segment spans residues 271 to 290; it reads GVALLITSVAPLLNPFIYTL. Over 291 to 309 the chain is Cytoplasmic; sequence RNQQVKQPFKDMVKKLLNL.

It belongs to the G-protein coupled receptor 1 family.

It is found in the cell membrane. Odorant receptor. In Homo sapiens (Human), this protein is Olfactory receptor 2AP1 (OR2AP1).